A 146-amino-acid polypeptide reads, in one-letter code: Hemoglobin cathodic subunit beta (146 aa).

The 145-residue stretch at 2–146 folds into the Globin domain; that stretch reads QWSSSERSVI…VVSGLSKQYF (145 aa). Histidine 63 is a heme b binding site.

Heterotetramer of two alpha and two beta chains. As to expression, red blood cells.

Its function is as follows. Involved in oxygen transport from the gills to various peripheral tissues. In Ophisurus serpens (Serpent eel), this protein is Hemoglobin cathodic subunit beta.